A 333-amino-acid chain; its full sequence is Electron transfer flavoprotein subunit alpha, mitochondrial (333 aa).

A mitochondrion-targeting transit peptide spans Met-1–Phe-19. The tract at residues Gln-20–Leu-204 is domain I. At Lys-59 the chain carries N6-acetyllysine; alternate. At Lys-59 the chain carries N6-succinyllysine; alternate. Lys-62 is subject to N6-acetyllysine. Lys-69 carries the post-translational modification N6-acetyllysine; alternate. Lys-69 carries the post-translational modification N6-succinyllysine; alternate. At Lys-75 the chain carries N6-acetyllysine. N6-acetyllysine; alternate is present on Lys-85. Lys-85 carries the post-translational modification N6-succinyllysine; alternate. Thr-93 carries the post-translational modification Phosphothreonine. 2 positions are modified to N6-acetyllysine: Lys-101 and Lys-139. At Ser-140 the chain carries Phosphoserine. Lys-158 carries the post-translational modification N6-acetyllysine; alternate. An N6-succinyllysine; alternate modification is found at Lys-158. Lys-164 carries the post-translational modification N6-acetyllysine. The residue at position 187 (Lys-187) is an N6-succinyllysine. Lys-203 is modified (N6-acetyllysine; alternate). Residue Lys-203 is modified to N6-succinyllysine; alternate. Residues Thr-205–Lys-333 are domain II. N6-succinyllysine is present on Lys-216. Residue Arg-223 coordinates FAD. Lys-226 and Lys-232 each carry N6-acetyllysine; alternate. N6-succinyllysine; alternate is present on residues Lys-226 and Lys-232. FAD-binding positions include Ser-248, Val-263–Thr-266, Ser-281–His-286, and Asn-300. Lys-301 carries the N6-succinyllysine modification. Asp-318–Leu-319 serves as a coordination point for FAD.

Belongs to the ETF alpha-subunit/FixB family. Heterodimer composed of ETFA and ETFB. Identified in a complex that contains ETFA, ETFB and ETFRF1. Interaction with ETFRF1 promotes dissociation of the bound FAD and loss of electron transfer activity. Interacts with TASOR. FAD is required as a cofactor. Post-translationally, the N-terminus is blocked.

The protein localises to the mitochondrion matrix. Functionally, heterodimeric electron transfer flavoprotein that accepts electrons from several mitochondrial dehydrogenases, including acyl-CoA dehydrogenases, glutaryl-CoA and sarcosine dehydrogenase. It transfers the electrons to the main mitochondrial respiratory chain via ETF-ubiquinone oxidoreductase (ETF dehydrogenase). Required for normal mitochondrial fatty acid oxidation and normal amino acid metabolism. The protein is Electron transfer flavoprotein subunit alpha, mitochondrial (ETFA) of Homo sapiens (Human).